We begin with the raw amino-acid sequence, 60 residues long: Large ribosomal subunit protein bL32 (60 aa).

A disordered region spans residues 1–60 (MAVQQNKKSPSKRGMHRSHNALTVPGIAVEPTTGETHLRHHISPNGFYRGRQVLKNKSEA). The span at 9–19 (SPSKRGMHRSH) shows a compositional bias: basic residues.

The protein belongs to the bacterial ribosomal protein bL32 family.

The sequence is that of Large ribosomal subunit protein bL32 from Paracidovorax citrulli (strain AAC00-1) (Acidovorax citrulli).